Reading from the N-terminus, the 289-residue chain is MEMNSPHEKAVQAIRYGHSCAMRLKRRLNHPMADGGPLSSYDLAKSIVESFSNAISILSAKPETEDDQFSDLSSRDSSPPPQGSPSKKRKIDSTNSSENWRDDSPDPIYYDGYLWRKYGQKSIKKSNHQRSYYRCSYNKDHNCEARKHEQKIKDNPPVYRTTYFGHHTCKTEHNLDAIFIAGQDPLDDFKSTQMIRFGKDQDQEKESRSNGFSLSVKHEEDIIKEQAIDQYREITSNDQDCQDVIEEYLSSPSGSYPPSSSSGSESADFNSDLLFDNPDSWDRYDQFYF.

The disordered stretch occupies residues 62–103; the sequence is PETEDDQFSDLSSRDSSPPPQGSPSKKRKIDSTNSSENWRDD. The WRKY DNA-binding region spans 104–172; the sequence is SPDPIYYDGY…YFGHHTCKTE (69 aa). Residues 249–266 are compositionally biased toward low complexity; sequence LSSPSGSYPPSSSSGSES. The interval 249–278 is disordered; sequence LSSPSGSYPPSSSSGSESADFNSDLLFDNP.

Belongs to the WRKY group III family.

Its subcellular location is the nucleus. Functionally, transcription factor. Interacts specifically with the W box (5'-(T)TGAC[CT]-3'), a frequently occurring elicitor-responsive cis-acting element. In Arabidopsis thaliana (Mouse-ear cress), this protein is Probable WRKY transcription factor 38 (WRKY38).